A 281-amino-acid polypeptide reads, in one-letter code: 18S rRNA (guanine-N(7))-methyltransferase (281 aa).

A disordered region spans residues 256–281; sequence KARRRRQGKEVCPDTQYTGRKRKPRF.

The protein belongs to the class I-like SAM-binding methyltransferase superfamily. BUD23/WBSCR22 family. Heterodimer with TRMT112; this heterodimerization is necessary for the metabolic stability and activity of the catalytic subunit BUD23. Interacts with GRIP1. Post-translationally, may be ubiquitinated and targeted to degradation in response to pro-inflammatory cytokine signaling.

Its subcellular location is the nucleus. The protein resides in the nucleoplasm. The protein localises to the cytoplasm. It is found in the perinuclear region. The catalysed reaction is a guanosine in 18S rRNA + S-adenosyl-L-methionine = an N(7)-methylguanosine in 18S rRNA + S-adenosyl-L-homocysteine. Its function is as follows. S-adenosyl-L-methionine-dependent methyltransferase that specifically methylates the N(7) position of a guanine in 18S rRNA. Requires the methyltransferase adapter protein TRM112 for full rRNA methyltransferase activity. Involved in the pre-rRNA processing steps leading to small-subunit rRNA production independently of its RNA-modifying catalytic activity. Important for biogenesis end export of the 40S ribosomal subunit independent on its methyltransferase activity. Locus-specific steroid receptor coactivator. Potentiates transactivation by glucocorticoid (NR3C1), mineralocorticoid (NR3C2), androgen (AR) and progesterone (PGR) receptors. Required for the maintenance of open chromatin at the TSC22D3/GILZ locus to facilitate NR3C1 loading on the response elements. Required for maintenance of dimethylation on histone H3 'Lys-79' (H3K79me2), although direct histone methyltransferase activity is not observed in vitro. The polypeptide is 18S rRNA (guanine-N(7))-methyltransferase (Bos taurus (Bovine)).